The chain runs to 172 residues: Translation initiation factor IF-3 (172 aa).

Belongs to the IF-3 family. Monomer.

The protein localises to the cytoplasm. In terms of biological role, IF-3 binds to the 30S ribosomal subunit and shifts the equilibrium between 70S ribosomes and their 50S and 30S subunits in favor of the free subunits, thus enhancing the availability of 30S subunits on which protein synthesis initiation begins. This Bartonella tribocorum (strain CIP 105476 / IBS 506) protein is Translation initiation factor IF-3.